The following is a 1007-amino-acid chain: Probable beta-galactosidase A (1007 aa).

The N-terminal stretch at 1-18 is a signal peptide; the sequence is MRLLPVWTAALLAAQAAG. 4 residues coordinate substrate: tyrosine 96, asparagine 140, alanine 141, and glutamate 142. Asparagine 156 carries N-linked (GlcNAc...) asparagine glycosylation. Substrate is bound at residue asparagine 199. Residue glutamate 200 is the Proton donor of the active site. Cysteine 205 and cysteine 206 are joined by a disulfide. Tyrosine 260 is a substrate binding site. Cysteine 266 and cysteine 315 are joined by a disulfide. Catalysis depends on glutamate 298, which acts as the Nucleophile. Position 364 (tyrosine 364) interacts with substrate. N-linked (GlcNAc...) asparagine glycans are attached at residues asparagine 405, asparagine 422, asparagine 621, asparagine 740, asparagine 775, and asparagine 914.

Belongs to the glycosyl hydrolase 35 family.

The protein localises to the secreted. It carries out the reaction Hydrolysis of terminal non-reducing beta-D-galactose residues in beta-D-galactosides.. Its function is as follows. Cleaves beta-linked terminal galactosyl residues from gangliosides, glycoproteins, and glycosaminoglycans. The sequence is that of Probable beta-galactosidase A (lacA) from Emericella nidulans (strain FGSC A4 / ATCC 38163 / CBS 112.46 / NRRL 194 / M139) (Aspergillus nidulans).